Consider the following 166-residue polypeptide: Small ribosomal subunit protein uS5 (166 aa).

The S5 DRBM domain maps to 11–74; sequence FLEKLIAVNR…EKARRNMVDV (64 aa).

It belongs to the universal ribosomal protein uS5 family. As to quaternary structure, part of the 30S ribosomal subunit. Contacts proteins S4 and S8.

With S4 and S12 plays an important role in translational accuracy. Its function is as follows. Located at the back of the 30S subunit body where it stabilizes the conformation of the head with respect to the body. In Alteromonas mediterranea (strain DSM 17117 / CIP 110805 / LMG 28347 / Deep ecotype), this protein is Small ribosomal subunit protein uS5.